The primary structure comprises 417 residues: Multifunctional CCA protein (417 aa).

ATP contacts are provided by glycine 8 and arginine 11. Residues glycine 8 and arginine 11 each contribute to the CTP site. The Mg(2+) site is built by aspartate 21 and aspartate 23. Residues arginine 91, arginine 137, and arginine 140 each contribute to the ATP site. CTP contacts are provided by arginine 91, arginine 137, and arginine 140. The HD domain maps to 225-326 (SGIHTLMTLQ…LNVLKKTDAF (102 aa)).

The protein belongs to the tRNA nucleotidyltransferase/poly(A) polymerase family. Bacterial CCA-adding enzyme type 1 subfamily. In terms of assembly, monomer. Can also form homodimers and oligomers. Mg(2+) is required as a cofactor. It depends on Ni(2+) as a cofactor.

It catalyses the reaction a tRNA precursor + 2 CTP + ATP = a tRNA with a 3' CCA end + 3 diphosphate. The catalysed reaction is a tRNA with a 3' CCA end + 2 CTP + ATP = a tRNA with a 3' CCACCA end + 3 diphosphate. Its function is as follows. Catalyzes the addition and repair of the essential 3'-terminal CCA sequence in tRNAs without using a nucleic acid template. Adds these three nucleotides in the order of C, C, and A to the tRNA nucleotide-73, using CTP and ATP as substrates and producing inorganic pyrophosphate. tRNA 3'-terminal CCA addition is required both for tRNA processing and repair. Also involved in tRNA surveillance by mediating tandem CCA addition to generate a CCACCA at the 3' terminus of unstable tRNAs. While stable tRNAs receive only 3'-terminal CCA, unstable tRNAs are marked with CCACCA and rapidly degraded. This Neisseria meningitidis serogroup C / serotype 2a (strain ATCC 700532 / DSM 15464 / FAM18) protein is Multifunctional CCA protein.